The primary structure comprises 262 residues: Acyl-[acyl-carrier-protein]--UDP-N-acetylglucosamine O-acyltransferase (262 aa).

It belongs to the transferase hexapeptide repeat family. LpxA subfamily. Homotrimer.

Its subcellular location is the cytoplasm. It catalyses the reaction a (3R)-hydroxyacyl-[ACP] + UDP-N-acetyl-alpha-D-glucosamine = a UDP-3-O-[(3R)-3-hydroxyacyl]-N-acetyl-alpha-D-glucosamine + holo-[ACP]. Its pathway is glycolipid biosynthesis; lipid IV(A) biosynthesis; lipid IV(A) from (3R)-3-hydroxytetradecanoyl-[acyl-carrier-protein] and UDP-N-acetyl-alpha-D-glucosamine: step 1/6. In terms of biological role, involved in the biosynthesis of lipid A, a phosphorylated glycolipid that anchors the lipopolysaccharide to the outer membrane of the cell. The polypeptide is Acyl-[acyl-carrier-protein]--UDP-N-acetylglucosamine O-acyltransferase (Vibrio vulnificus (strain CMCP6)).